The following is a 78-amino-acid chain: Acyl carrier protein (78 aa).

Residues serine 2–serine 77 form the Carrier domain. The residue at position 37 (serine 37) is an O-(pantetheine 4'-phosphoryl)serine.

It belongs to the acyl carrier protein (ACP) family. Post-translationally, 4'-phosphopantetheine is transferred from CoA to a specific serine of apo-ACP by AcpS. This modification is essential for activity because fatty acids are bound in thioester linkage to the sulfhydryl of the prosthetic group.

The protein localises to the cytoplasm. Its pathway is lipid metabolism; fatty acid biosynthesis. Functionally, carrier of the growing fatty acid chain in fatty acid biosynthesis. In Bartonella quintana (strain Toulouse) (Rochalimaea quintana), this protein is Acyl carrier protein.